Here is a 226-residue protein sequence, read N- to C-terminus: UPF0319 protein SO_1816 (226 aa).

The N-terminal stretch at 1–21 is a signal peptide; the sequence is MKSLLPISSLLVLLGSASVSA.

It belongs to the UPF0319 family.

The protein is UPF0319 protein SO_1816 of Shewanella oneidensis (strain ATCC 700550 / JCM 31522 / CIP 106686 / LMG 19005 / NCIMB 14063 / MR-1).